The chain runs to 509 residues: GMP synthase [glutamine-hydrolyzing] (509 aa).

In terms of domain architecture, Glutamine amidotransferase type-1 spans 4–193 (NVLILDFGSQ…LIKIAGTKAT (190 aa)). The active-site Nucleophile is Cys79. Active-site residues include His167 and Glu169. The 191-residue stretch at 194-384 (WTPGKFVDLT…LGIDKELLGR (191 aa)) folds into the GMPS ATP-PPase domain. An ATP-binding site is contributed by 221–227 (SGGVDST).

In terms of assembly, homodimer.

The catalysed reaction is XMP + L-glutamine + ATP + H2O = GMP + L-glutamate + AMP + diphosphate + 2 H(+). The protein operates within purine metabolism; GMP biosynthesis; GMP from XMP (L-Gln route): step 1/1. Functionally, catalyzes the synthesis of GMP from XMP. This is GMP synthase [glutamine-hydrolyzing] from Christiangramia forsetii (strain DSM 17595 / CGMCC 1.15422 / KT0803) (Gramella forsetii).